A 465-amino-acid polypeptide reads, in one-letter code: SET domain-containing protein 3 (465 aa).

The SET domain occupies 18–265; sequence DKVTVKWDKK…AREELLDSYG (248 aa).

Belongs to the class V-like SAM-binding methyltransferase superfamily.

In Caenorhabditis elegans, this protein is SET domain-containing protein 3 (set-3).